We begin with the raw amino-acid sequence, 326 residues long: MRLLRPTPRLSSIFSSKTATSNLRFFTAMAPHNDVGAFHEALRSSKRILALCGAGLSASSGLPTFRGAGGLWRNHDATSLATLSAFKNDPGLVWLFYNYRRHMCLRAEPNPAHYALAALAEKNKDFLCLTQNVDNLSQQAGHPQDQLRTLHGSLFDIKCTNCDWIQRGNYDDPFCPALAPASVDVEPGKPFPLLDASLPLDPISPDDIPKCPQCKIGFQRPGVVWFGENLDEVMMMGITNWLLEDKVDLMLVIGTSAQVYPAAGYIDKAKRKGARIAVINPEAENEEEMYKVKPGDFAFGKDAAEYLPLLLEPVIGKLETDKKERS.

Residues 1 to 26 (MRLLRPTPRLSSIFSSKTATSNLRFF) constitute a mitochondrion transit peptide. The Deacetylase sirtuin-type domain occupies 28 to 324 (AMAPHNDVGA…IGKLETDKKE (297 aa)). 53 to 72 (GAGLSASSGLPTFRGAGGLW) provides a ligand contact to NAD(+). The substrate site is built by Tyr-97 and Arg-100. His-151 (proton acceptor) is an active-site residue. The Zn(2+) site is built by Cys-159, Cys-162, Cys-211, and Cys-214.

Belongs to the sirtuin family. Class I subfamily. In terms of assembly, interacts with LAT1; the interaction is direct. Requires Zn(2+) as cofactor.

It localises to the mitochondrion. Its subcellular location is the cytoplasm. The protein resides in the cytosol. It is found in the nucleus. The protein localises to the chromosome. The catalysed reaction is N(6)-acetyl-L-lysyl-[protein] + NAD(+) + H2O = 2''-O-acetyl-ADP-D-ribose + nicotinamide + L-lysyl-[protein]. It carries out the reaction N(6)-(2E)-butenoyl-L-lysyl-[protein] + H2O = (2E)-2-butenoate + L-lysyl-[protein]. Its function is as follows. NAD-dependent protein-lysine deacylase that decrotonylates the PDC (pyruvate dehydrogenase complex) subunit LAT1 at 'Lys-148' to inhibit PDC activity and consequently ATP production. Also decrotonylates histone H3 crotonylated at 'Lys-18' (H3K18cr), to repress the expression of genes involved in aerobic respiration. May also act as a NAD-dependent deacetylase. Does not mediate desuccinylation, demalonylation, or deglutarylation of LAT1. The polypeptide is NAD-dependent protein deacylase SIR5 (Fusarium oxysporum f. sp. lycopersici (strain 4287 / CBS 123668 / FGSC 9935 / NRRL 34936) (Fusarium vascular wilt of tomato)).